Consider the following 240-residue polypeptide: Ribose-5-phosphate isomerase (240 aa).

Substrate is bound by residues 34–37 (SGST), 88–91 (DGAD), and 101–104 (KGGG). E110 (proton acceptor) is an active-site residue. Substrate is bound at residue K128.

The protein belongs to the ribose 5-phosphate isomerase family.

It is found in the cytoplasm. It catalyses the reaction aldehydo-D-ribose 5-phosphate = D-ribulose 5-phosphate. Its pathway is carbohydrate degradation; pentose phosphate pathway; D-ribose 5-phosphate from D-ribulose 5-phosphate (non-oxidative stage): step 1/1. Functionally, involved in the first step of the non-oxidative branch of the pentose phosphate pathway. It catalyzes the reversible conversion of ribose-5-phosphate to ribulose 5-phosphate. The protein is Ribose-5-phosphate isomerase (RKI1) of Candida albicans (strain SC5314 / ATCC MYA-2876) (Yeast).